A 139-amino-acid polypeptide reads, in one-letter code: Small ribosomal subunit protein uS11 (139 aa).

The disordered stretch occupies residues 1-33 (MPPAKKGPATSARKGQKTRRREKKNVPHGAAHI). Positions 14–23 (KGQKTRRREK) are enriched in basic residues.

Belongs to the universal ribosomal protein uS11 family. As to quaternary structure, part of the 30S ribosomal subunit. Interacts with proteins S7 and S18. Binds to IF-3.

Functionally, located on the platform of the 30S subunit, it bridges several disparate RNA helices of the 16S rRNA. Forms part of the Shine-Dalgarno cleft in the 70S ribosome. This chain is Small ribosomal subunit protein uS11, found in Mycobacterium bovis (strain ATCC BAA-935 / AF2122/97).